Consider the following 908-residue polypeptide: 3-phosphoinositide-dependent protein kinase B (908 aa).

Low complexity-rich tracts occupy residues 53-170 (NNNF…SSSL), 179-189 (YSDSSDSIDSY), and 200-216 (QQQQHLQQQQDQPQPLH). A disordered region spans residues 53-267 (NNNFNNNNNN…PNSSIPHKKS (215 aa)). Over residues 250-262 (KTSSFGLQPNSSI) the composition is skewed to polar residues. Residues 271 to 527 (FDFIRTIGKG…ISEIKNHEFF (257 aa)) form the Protein kinase domain. Residues 281–283 (AYG) and lysine 300 each bind ATP. Residues 302–346 (LNKKLIIKEKKAKYVNTEKTILDSLDNPNIVKLFYTFQDENNLYF) form a PIF-pocket region. ATP contacts are provided by residues 349–351 (EYC) and aspartate 355. Aspartate 394 serves as the catalytic Proton acceptor. Residues glutamate 398 and aspartate 412 each contribute to the ATP site. Disordered regions lie at residues 538–560 (SQTPPPIEQMVPQSPFPSPNSSL) and 606–755 (ISNN…KNLQ). A compositionally biased stretch (low complexity) spans 607–684 (SNNNNNNNNT…PAYSSTPSST (78 aa)). A compositionally biased stretch (polar residues) spans 696-709 (SSCSSNNLLGKSSN). Low complexity predominate over residues 710 to 741 (QQYQPFQFHQQQQQQQQQQQRERSSTTTPSPT). The region spanning 764 to 902 (SSFSTSSPMS…KLWVDLINEL (139 aa)) is the PH domain.

The protein belongs to the protein kinase superfamily. AGC Ser/Thr protein kinase family. PDPK1 subfamily.

The catalysed reaction is L-seryl-[protein] + ATP = O-phospho-L-seryl-[protein] + ADP + H(+). The enzyme catalyses L-threonyl-[protein] + ATP = O-phospho-L-threonyl-[protein] + ADP + H(+). The chain is 3-phosphoinositide-dependent protein kinase B (pdkB) from Dictyostelium discoideum (Social amoeba).